Consider the following 997-residue polypeptide: Sorting nexin-19 (997 aa).

One can recognise a PXA domain in the interval 95–273 (ERQLEQEINR…ILVSIFSKYR (179 aa)). Disordered regions lie at residues 313-333 (SSPA…SPEI) and 413-437 (GALE…APGT). Acidic residues predominate over residues 422–435 (GSECMEGAEAEEAP). The region spanning 538-668 (LRITGTITAR…EFLALNTDAR (131 aa)) is the PX domain. A 1,2-diacyl-sn-glycero-3-phospho-(1D-myo-inositol-3-phosphate)-binding residues include arginine 587 and arginine 634. Residues 697 to 728 (FPRSEPQSPTEELSEAENESKPQTEGKKASKS) form a disordered region. The span at 714-724 (NESKPQTEGKK) shows a compositional bias: basic and acidic residues.

This sequence belongs to the sorting nexin family. In terms of assembly, interacts with PTPRN.

The protein resides in the early endosome membrane. It is found in the cytoplasmic vesicle membrane. Plays a role in intracellular vesicle trafficking and exocytosis. May play a role in maintaining insulin-containing dense core vesicles in pancreatic beta-cells and in preventing their degradation. May play a role in insulin secretion. Interacts with membranes containing phosphatidylinositol 3-phosphate (PtdIns(3P)). The sequence is that of Sorting nexin-19 from Mus musculus (Mouse).